We begin with the raw amino-acid sequence, 299 residues long: tRNA dimethylallyltransferase (299 aa).

Position 13–20 (13–20) interacts with ATP; the sequence is GPTASGKT. 15–20 contacts substrate; sequence TASGKT. An interaction with substrate tRNA region spans residues 38–41; sequence DSRQ.

This sequence belongs to the IPP transferase family. Monomer. It depends on Mg(2+) as a cofactor.

The enzyme catalyses adenosine(37) in tRNA + dimethylallyl diphosphate = N(6)-dimethylallyladenosine(37) in tRNA + diphosphate. Functionally, catalyzes the transfer of a dimethylallyl group onto the adenine at position 37 in tRNAs that read codons beginning with uridine, leading to the formation of N6-(dimethylallyl)adenosine (i(6)A). The polypeptide is tRNA dimethylallyltransferase (Synechococcus sp. (strain CC9605)).